Reading from the N-terminus, the 220-residue chain is Deoxyribose-phosphate aldolase (220 aa).

Asp89 acts as the Proton donor/acceptor in catalysis. Lys151 acts as the Schiff-base intermediate with acetaldehyde in catalysis. The active-site Proton donor/acceptor is the Lys180.

This sequence belongs to the DeoC/FbaB aldolase family. DeoC type 1 subfamily.

The protein resides in the cytoplasm. It catalyses the reaction 2-deoxy-D-ribose 5-phosphate = D-glyceraldehyde 3-phosphate + acetaldehyde. It functions in the pathway carbohydrate degradation; 2-deoxy-D-ribose 1-phosphate degradation; D-glyceraldehyde 3-phosphate and acetaldehyde from 2-deoxy-alpha-D-ribose 1-phosphate: step 2/2. Functionally, catalyzes a reversible aldol reaction between acetaldehyde and D-glyceraldehyde 3-phosphate to generate 2-deoxy-D-ribose 5-phosphate. The sequence is that of Deoxyribose-phosphate aldolase from Streptococcus pneumoniae (strain Hungary19A-6).